Reading from the N-terminus, the 188-residue chain is Elongation factor P (188 aa).

It belongs to the elongation factor P family.

Its subcellular location is the cytoplasm. Its pathway is protein biosynthesis; polypeptide chain elongation. In terms of biological role, involved in peptide bond synthesis. Stimulates efficient translation and peptide-bond synthesis on native or reconstituted 70S ribosomes in vitro. Probably functions indirectly by altering the affinity of the ribosome for aminoacyl-tRNA, thus increasing their reactivity as acceptors for peptidyl transferase. The chain is Elongation factor P from Methylorubrum extorquens (strain CM4 / NCIMB 13688) (Methylobacterium extorquens).